The chain runs to 628 residues: MCGIVGYVGHRPARDIVVDALRRMEYRGYDSAGIALIDGNGGLTVRRRAGRLANLEATLAETDSNDGDGLGGSTGLGHTRWATHGRPTDRNAHPHRDAAGKIAVVHNGIIENFAPLRAELEAAGVEFASDTDTEVAVHLVARQYTQGDTAGDFPASVLAVLQRLEGHFTLVFASADDPGTIVAARRSTPLVLGIGDGEMFVGSDVAAFIEHTRDAVELGQDQAVVLTADGYRITDFAGNDHLEAGRDFREFHIDWDLNAAEKGGYDYFMLKEIAEQPSAVADTLLGHFDKNRIVLDEQRLSDQELREIDKVFIVACGTAYHSGLLAKYAIEHWTRLPVEVELASEFRYRDPVLDRSTLVIAISQSGETADTLEAVRHAKTQKAKVLAICNTNGSQIPREADAVLYTRAGPEIGVAATKTFLAQIAANYLVGLALAQARGTKYPDEVAREYRELEAMPDLIKRVLAGMDSVAALAERFAPSSTVLFLGRHVGYPVALEGALKLKELAYMHAEGFAAGELKHGPIALIDENLPVIVVMPSPKNAAMLHAKLLSNIREIQARGAVTVVIAEEDDDTVRPYADHLIEIPSVSTLFQPLLSTIPLQVFAAGVARARGYDVDKPRNLAKSVTVE.

The Nucleophile; for GATase activity role is filled by Cys-2. The 228-residue stretch at 2-229 (CGIVGYVGHR…QDQAVVLTAD (228 aa)) folds into the Glutamine amidotransferase type-2 domain. A disordered region spans residues 61–94 (ETDSNDGDGLGGSTGLGHTRWATHGRPTDRNAHP). SIS domains are found at residues 301–440 (SDQE…ARGT) and 473–618 (LAER…VDKP). The active-site For Fru-6P isomerization activity is Lys-623.

As to quaternary structure, homodimer.

It localises to the cytoplasm. The catalysed reaction is D-fructose 6-phosphate + L-glutamine = D-glucosamine 6-phosphate + L-glutamate. Functionally, catalyzes the first step in hexosamine metabolism, converting fructose-6P into glucosamine-6P using glutamine as a nitrogen source. This Mycolicibacterium smegmatis (strain ATCC 700084 / mc(2)155) (Mycobacterium smegmatis) protein is Glutamine--fructose-6-phosphate aminotransferase [isomerizing].